Consider the following 229-residue polypeptide: Enolase-phosphatase E1 (229 aa).

The protein belongs to the HAD-like hydrolase superfamily. MasA/MtnC family. As to quaternary structure, monomer. The cofactor is Mg(2+).

It carries out the reaction 5-methylsulfanyl-2,3-dioxopentyl phosphate + H2O = 1,2-dihydroxy-5-(methylsulfanyl)pent-1-en-3-one + phosphate. It participates in amino-acid biosynthesis; L-methionine biosynthesis via salvage pathway; L-methionine from S-methyl-5-thio-alpha-D-ribose 1-phosphate: step 3/6. It functions in the pathway amino-acid biosynthesis; L-methionine biosynthesis via salvage pathway; L-methionine from S-methyl-5-thio-alpha-D-ribose 1-phosphate: step 4/6. Its function is as follows. Bifunctional enzyme that catalyzes the enolization of 2,3-diketo-5-methylthiopentyl-1-phosphate (DK-MTP-1-P) into the intermediate 2-hydroxy-3-keto-5-methylthiopentenyl-1-phosphate (HK-MTPenyl-1-P), which is then dephosphorylated to form the acireductone 1,2-dihydroxy-3-keto-5-methylthiopentene (DHK-MTPene). This Citrobacter koseri (strain ATCC BAA-895 / CDC 4225-83 / SGSC4696) protein is Enolase-phosphatase E1.